Reading from the N-terminus, the 440-residue chain is 3-phosphoshikimate 1-carboxyvinyltransferase (440 aa).

The 3-phosphoshikimate site is built by lysine 29 and arginine 34. A phosphoenolpyruvate-binding site is contributed by lysine 29. Glycine 99 and arginine 128 together coordinate phosphoenolpyruvate. Positions 171, 172, 173, 199, 316, and 343 each coordinate 3-phosphoshikimate. Phosphoenolpyruvate is bound at residue glutamine 173. The Proton acceptor role is filled by aspartate 316. Residues arginine 347, arginine 390, and lysine 416 each contribute to the phosphoenolpyruvate site.

The protein belongs to the EPSP synthase family. In terms of assembly, monomer.

It is found in the cytoplasm. The enzyme catalyses 3-phosphoshikimate + phosphoenolpyruvate = 5-O-(1-carboxyvinyl)-3-phosphoshikimate + phosphate. The protein operates within metabolic intermediate biosynthesis; chorismate biosynthesis; chorismate from D-erythrose 4-phosphate and phosphoenolpyruvate: step 6/7. Its function is as follows. Catalyzes the transfer of the enolpyruvyl moiety of phosphoenolpyruvate (PEP) to the 5-hydroxyl of shikimate-3-phosphate (S3P) to produce enolpyruvyl shikimate-3-phosphate and inorganic phosphate. This Deinococcus geothermalis (strain DSM 11300 / CIP 105573 / AG-3a) protein is 3-phosphoshikimate 1-carboxyvinyltransferase.